A 138-amino-acid chain; its full sequence is Large ribosomal subunit protein uL11c (138 aa).

It belongs to the universal ribosomal protein uL11 family. Part of the ribosomal stalk of the 50S ribosomal subunit. Interacts with L10 and the large rRNA to form the base of the stalk. L10 forms an elongated spine to which L12 dimers bind in a sequential fashion forming a multimeric L10(L12)X complex.

It is found in the plastid. Its subcellular location is the chloroplast. Forms part of the ribosomal stalk which helps the ribosome interact with GTP-bound translation factors. This is Large ribosomal subunit protein uL11c from Cyanidioschyzon merolae (strain NIES-3377 / 10D) (Unicellular red alga).